Consider the following 489-residue polypeptide: Rhamnulokinase (489 aa).

13 to 17 (ASSGR) lines the ATP pocket. An intrachain disulfide couples C68 to C222. Residues G83 and 236 to 238 (HDT) contribute to the substrate site. Catalysis depends on D237, which acts as the Proton acceptor. T259 is an ATP binding site. N296 is a substrate binding site. Q304 provides a ligand contact to ATP. C353 and C370 are joined by a disulfide. G402 lines the ATP pocket. C413 and C417 are disulfide-bonded.

Belongs to the rhamnulokinase family. Requires Mg(2+) as cofactor.

The enzyme catalyses L-rhamnulose + ATP = L-rhamnulose 1-phosphate + ADP + H(+). The protein operates within carbohydrate degradation; L-rhamnose degradation; glycerone phosphate from L-rhamnose: step 2/3. In terms of biological role, involved in the catabolism of L-rhamnose (6-deoxy-L-mannose). Catalyzes the transfer of the gamma-phosphate group from ATP to the 1-hydroxyl group of L-rhamnulose to yield L-rhamnulose 1-phosphate. This chain is Rhamnulokinase, found in Shigella flexneri serotype 5b (strain 8401).